A 903-amino-acid chain; its full sequence is Probable leucine--tRNA ligase, mitochondrial (903 aa).

At lysine 68 the chain carries N6-acetyllysine. The 'HIGH' region motif lies at 92–102 (YPSGKLHMGHV). Lysine 236 is modified (N6-acetyllysine). Positions 639–643 (KMSKS) match the 'KMSKS' region motif. Lysine 642 contributes to the ATP binding site. At serine 711 the chain carries Phosphoserine.

This sequence belongs to the class-I aminoacyl-tRNA synthetase family.

It localises to the mitochondrion matrix. It catalyses the reaction tRNA(Leu) + L-leucine + ATP = L-leucyl-tRNA(Leu) + AMP + diphosphate. The chain is Probable leucine--tRNA ligase, mitochondrial (LARS2) from Pongo abelii (Sumatran orangutan).